The primary structure comprises 326 residues: dTDP-4-dehydro-6-deoxy-D-allose reductase (326 aa).

NAD(+) contacts are provided by residues Gly-15–Gly-21 and Met-129–Ser-132. The Proton donor/acceptor role is filled by Tyr-160. NAD(+)-binding positions include Lys-164 and Pro-187 to Val-190.

It belongs to the NAD(P)-dependent epimerase/dehydratase family.

The catalysed reaction is dTDP-6-deoxy-alpha-D-allose + NAD(+) = dTDP-4-dehydro-6-deoxy-alpha-D-allose + NADH + H(+). It catalyses the reaction dTDP-6-deoxy-alpha-D-allose + NADP(+) = dTDP-4-dehydro-6-deoxy-alpha-D-allose + NADPH + H(+). In terms of biological role, catalyzes the stereospecific reduction of the C-4 keto group of dTDP-4-dehydro-6-deoxy-D-allose, leading to dTDP-6-deoxy-D-allose, an intermediate in the biosynthesis of the mycinose moiety of dihydrochalcomycin (GERI-155) antibiotic. Cannot directly reduce dTDP-4-dehydro-6-deoxyglucose, and thus acts after the epimerization step catalyzed by GerF. The chain is dTDP-4-dehydro-6-deoxy-D-allose reductase (gerKI) from Streptomyces sp.